Here is a 313-residue protein sequence, read N- to C-terminus: tRNA dimethylallyltransferase (313 aa).

ATP is bound at residue 10-17 (GPTASGKT). Substrate is bound at residue 12-17 (TASGKT). Interaction with substrate tRNA stretches follow at residues 35 to 38 (DSAM), 159 to 163 (QRIQR), and 240 to 245 (RCVGYR).

This sequence belongs to the IPP transferase family. Monomer. Mg(2+) serves as cofactor.

It carries out the reaction adenosine(37) in tRNA + dimethylallyl diphosphate = N(6)-dimethylallyladenosine(37) in tRNA + diphosphate. Catalyzes the transfer of a dimethylallyl group onto the adenine at position 37 in tRNAs that read codons beginning with uridine, leading to the formation of N6-(dimethylallyl)adenosine (i(6)A). This is tRNA dimethylallyltransferase from Legionella pneumophila (strain Corby).